The chain runs to 610 residues: Solute carrier family 23 member 3 (610 aa).

Over residues 1–16 (MSRSPLNPSQLRSVGS) the composition is skewed to polar residues. Positions 1–32 (MSRSPLNPSQLRSVGSQDALAPLPPPAPQNPS) are disordered. Over 1–49 (MSRSPLNPSQLRSVGSQDALAPLPPPAPQNPSTHSWDPLCGSLPWGLSC) the chain is Cytoplasmic. Residues 50-70 (LLALQHVLVMASLLCVSHLLL) traverse the membrane as a helical segment. Residues 71–85 (LCSLSPGGLSYSPSQ) lie on the Extracellular side of the membrane. A helical membrane pass occupies residues 86–106 (LLASSFFSCGMSTILQTWMGS). Over 107–164 (RLPLVQAPSLEFLIPALVLTSQKLPRAIQTPGNSSLMLHLCRGPSCHGLGHWNTSLQE) the chain is Cytoplasmic. The helical transmembrane segment at 165–185 (VSGAVVVSGLLQGMMGLLGSP) threads the bilayer. Residues 186 to 187 (GH) lie on the Extracellular side of the membrane. A helical transmembrane segment spans residues 188-208 (VFPHCGPLVLAPSLVVAGLSA). Residues 209–211 (HRE) are Cytoplasmic-facing. A helical transmembrane segment spans residues 212–232 (VAQFCFTHWGLALLVILLMVV). Residues 233–266 (CSQHLGSCQFHVCPWRRASTSSTHTPLPVFRLLS) are Extracellular-facing. A helical transmembrane segment spans residues 267 to 287 (VLIPVACVWIVSAFVGFSVIP). Topologically, residues 288-316 (QELSAPTKAPWIWLPHPGEWNWPLLTPRA) are cytoplasmic. The chain crosses the membrane as a helical span at residues 317–337 (LAAGISMALAASTSSLGCYAL). Residues 338 to 355 (CGRLLHLPPPPPHACSRG) are Extracellular-facing. A helical transmembrane segment spans residues 356-376 (LSLEGLGSVLAGLLGSPMGTA). Over 377–394 (SSFPNVGKVGLIQAGSQQ) the chain is Cytoplasmic. Residues 395–414 (VAHLVGLLCVGLGLSPRLAQ) traverse the membrane as a helical segment. Over 415-423 (LLTTIPLPV) the chain is Extracellular. Residues 424-446 (VGGVLGVTQAVVLSAGFSSFYLA) traverse the membrane as a helical segment. Topologically, residues 447 to 452 (DIDSGR) are cytoplasmic. Residues 453–472 (NIFIVGFSIFMALLLPRWFR) traverse the membrane as a helical segment. The Extracellular portion of the chain corresponds to 473–486 (EAPVLFSTGWSPLD). Residues 487-507 (VLLHSLLTQPIFLAGLSGFLL) form a helical membrane-spanning segment. Residues 508–610 (ENTIPGTQLE…SSREGFRSQK (103 aa)) are Cytoplasmic-facing. The segment at 571–610 (PEDPGDEEGGSSEPEEMADLLPGSGEPCPESSREGFRSQK) is disordered. Positions 573-588 (DPGDEEGGSSEPEEMA) are enriched in acidic residues. The span at 601–610 (SSREGFRSQK) shows a compositional bias: basic and acidic residues.

This sequence belongs to the nucleobase:cation symporter-2 (NCS2) (TC 2.A.40) family.

It is found in the membrane. It carries out the reaction hypoxanthine(out) + Na(+)(out) = hypoxanthine(in) + Na(+)(in). Functionally, acts as a sodium-dependent hypoxanthine transporter. May show xanthine-hypoxanthine exchange activity. This Homo sapiens (Human) protein is Solute carrier family 23 member 3 (SLC23A3).